Here is a 511-residue protein sequence, read N- to C-terminus: Ent-copalyl diphosphate synthase (511 aa).

D291 and D293 together coordinate a divalent metal cation. Positions 291-294 (DSDD) match the DXDD motif motif.

This sequence belongs to the terpene synthase family. Homodimer. Requires a divalent metal cation as cofactor.

The catalysed reaction is (2E,6E,10E)-geranylgeranyl diphosphate = ent-copalyl diphosphate. It participates in antibiotic biosynthesis. Involved in viguiepinol biosynthesis. Catalyzes the conversion of geranylgeranyl diphosphate (GGDP) into copalyl diphosphate (ent-CDP). This is Ent-copalyl diphosphate synthase from Streptomyces sp. (strain KO-3988).